The sequence spans 1556 residues: Disco-interacting protein 2 homolog C (1556 aa).

In terms of domain architecture, DMAP1-binding spans 7–120 (EGMALPLEVR…PMPSKRRSLV (114 aa)). Disordered stretches follow at residues 47–157 (YLPQ…SQGS) and 170–189 (GSTT…SGAA). Basic and acidic residues predominate over residues 81-93 (GSRDERYRSDVHT). Composition is skewed to polar residues over residues 120-136 (VVQT…TSSG) and 144-157 (QGDS…SQGS). The segment covering 170-183 (GSTTSTTSSSSTQS) has biased composition (low complexity). Threonine 264 carries the post-translational modification Phosphothreonine.

This sequence belongs to the DIP2 family.

The sequence is that of Disco-interacting protein 2 homolog C (DIP2C) from Homo sapiens (Human).